Reading from the N-terminus, the 1223-residue chain is Rho family-interacting cell polarization regulator 1 (1223 aa).

Serine 22 is modified (phosphoserine). Residues 83–112 adopt a coiled-coil conformation; sequence RGLTAYLEVHQQEQEKLQRQIKESKRNSRL. A phosphoserine mark is found at serine 345 and serine 347. Position 351 is a phosphothreonine (threonine 351). Positions 371 to 411 are disordered; sequence NGTAWSLSSESSDDSSSPQLSGTARHSTPKPLVQQPEPLPV. 2 stretches are compositionally biased toward low complexity: residues 376 to 391 and 399 to 411; these read SLSS…PQLS and PKPL…PLPV. A phosphoserine mark is found at serine 451, serine 454, and serine 468. Composition is skewed to low complexity over residues 566–586 and 595–655; these read TTIG…GSVP and TPSP…TSPT. 2 disordered regions span residues 566–771 and 856–887; these read TTIG…QHSE and FLND…LDSS. Residues 656-665 are compositionally biased toward polar residues; sequence QEAKMSTHTT. The span at 673–688 shows a compositional bias: low complexity; sequence TTTSPISTTESPSPST. Composition is skewed to polar residues over residues 693 to 703 and 725 to 741; these read ISSSSAESTGP and ASCT…SKPL. Serine 748 bears the Phosphoserine mark. Residues 748-767 are compositionally biased toward low complexity; sequence SPEQIPKSPSSSPSSSAPEP. The span at 858–867 shows a compositional bias: acidic residues; it reads NDDEDEDNDG. Over residues 868–885 the composition is skewed to basic and acidic residues; that stretch reads PGDRHTSSPEVVAEDRLD. Residues serine 874 and serine 875 each carry the phosphoserine modification.

The protein belongs to the RIPOR family. In terms of assembly, interacts (via N-terminus) with RHOA (GTP-bound form); this interaction links active RHOA to STK24 and STK26 kinases. Interacts with RHOB. Interacts with RHOC. Interacts (via C-terminus) with PDCD10; this interaction occurs in a Rho-independent manner. Interacts (via C-terminus) with STK24; this interaction occurs in a PDCD10-dependent and Rho-independent manner. Interacts (via C-terminus) with STK26; this interaction occurs in a PDCD10-dependent and Rho-independent manner. Interacts (via N-terminus) with 14-3-3 proteins; these interactions occur in a Rho-dependent manner. In terms of tissue distribution, expressed in the kidney exclusively by glomerular podocytes.

The protein localises to the cytoplasm. It is found in the golgi apparatus. Functionally, downstream effector protein for Rho-type small GTPases that plays a role in cell polarity and directional migration. Acts as an adapter protein, linking active Rho proteins to STK24 and STK26 kinases, and hence positively regulates Golgi reorientation in polarized cell migration upon Rho activation. Involved in the subcellular relocation of STK26 from the Golgi to cytoplasm punctae in a Rho- and PDCD10-dependent manner upon serum stimulation. The sequence is that of Rho family-interacting cell polarization regulator 1 from Mus musculus (Mouse).